We begin with the raw amino-acid sequence, 155 residues long: Mediator of RNA polymerase II transcription subunit 10 (155 aa).

The tract at residues 54–80 is disordered; it reads SSHTQSHAPDADTAQANPSDPPISTIE.

This sequence belongs to the Mediator complex subunit 10 family. Component of the Mediator complex.

Its subcellular location is the nucleus. Functionally, component of the Mediator complex, a coactivator involved in the regulated transcription of nearly all RNA polymerase II-dependent genes. Mediator functions as a bridge to convey information from gene-specific regulatory proteins to the basal RNA polymerase II transcription machinery. Mediator is recruited to promoters by direct interactions with regulatory proteins and serves as a scaffold for the assembly of a functional preinitiation complex with RNA polymerase II and the general transcription factors. In Aspergillus terreus (strain NIH 2624 / FGSC A1156), this protein is Mediator of RNA polymerase II transcription subunit 10 (nut2).